The primary structure comprises 233 residues: Nickel import system ATP-binding protein NikE (233 aa).

An ABC transporter domain is found at 2–228 (IELKHVTFGY…DRHSYTKELV (227 aa)). 35-42 (GESGCGKS) contacts ATP.

This sequence belongs to the ABC transporter superfamily. As to quaternary structure, the complex is composed of two ATP-binding proteins (NikD and NikE), two transmembrane proteins (NikB and NikC) and a solute-binding protein (NikA).

It is found in the cell membrane. It carries out the reaction Ni(2+)(out) + ATP + H2O = Ni(2+)(in) + ADP + phosphate + H(+). Its function is as follows. Part of the ABC transporter complex NikABCDE (Opp2) involved in nickel import. Probably responsible for energy coupling to the transport system. This chain is Nickel import system ATP-binding protein NikE, found in Staphylococcus aureus (strain bovine RF122 / ET3-1).